Reading from the N-terminus, the 559-residue chain is MTAQHSDITATSAWQKLHAHRDETSALTIRELFAADTERGRELTLTAGELYIDYSKQRVSRHTLALLVELARAAGVEERRDAMFRGERINTSEDRAVLHTALRLPAHASLRVDGHDVVADVHRVLARMGVFSDRLRSGEWRGATGRPIMTVVNIGIGGSDLGPHMVYRALRHYADSGISVRFISNVDPSDLVATLADLDPSTTLFIVASKTFSTLETLTNAANARRWVTSALGEQAVARHFVAVSTNAERVAAFGIDTENMFGFWDWVGGRYSVGSAVGLAVMVAIGKDSFEEFLDGFHTIDRHFADTPLEDNAPAILALLGVWYSNFFGAETRAILPYSNDLGRFPAYLQQLAMESNGKSVRADGSPIGTTTGAVFWGEPGSNGQHAFYQLLHQGTRLVPADFIGFAEPTHDLPAADGAGSMHNILMSNLFAQSRVLAFGKTPEELTREDTAPDLIAHKTMPGNQPSTTILAPRLTPSVLGQLIALYEHQVFVEGIIYGIGSFDQWGVELGKTQALELEPALSSGNGSLPSDLDSSTASMIRWYHGVRAHGTATVGRP.

The active-site Proton donor is the glutamate 356. Residues histidine 387 and lysine 513 contribute to the active site.

It belongs to the GPI family.

It is found in the cytoplasm. It carries out the reaction alpha-D-glucose 6-phosphate = beta-D-fructose 6-phosphate. The protein operates within carbohydrate biosynthesis; gluconeogenesis. Its pathway is carbohydrate degradation; glycolysis; D-glyceraldehyde 3-phosphate and glycerone phosphate from D-glucose: step 2/4. Catalyzes the reversible isomerization of glucose-6-phosphate to fructose-6-phosphate. The protein is Glucose-6-phosphate isomerase 4 of Rhodococcus jostii (strain RHA1).